We begin with the raw amino-acid sequence, 136 residues long: ATP synthase epsilon chain (136 aa).

The tract at residues 95–115 (DFSEAQSRLEEANKGSDRREQ) is disordered. Basic and acidic residues predominate over residues 101 to 115 (SRLEEANKGSDRREQ).

The protein belongs to the ATPase epsilon chain family. F-type ATPases have 2 components, CF(1) - the catalytic core - and CF(0) - the membrane proton channel. CF(1) has five subunits: alpha(3), beta(3), gamma(1), delta(1), epsilon(1). CF(0) has three main subunits: a, b and c.

The protein resides in the cellular thylakoid membrane. In terms of biological role, produces ATP from ADP in the presence of a proton gradient across the membrane. The protein is ATP synthase epsilon chain of Rippkaea orientalis (strain PCC 8801 / RF-1) (Cyanothece sp. (strain PCC 8801)).